The following is an 85-amino-acid chain: UPF0297 protein LBA0418 (85 aa).

It belongs to the UPF0297 family.

The sequence is that of UPF0297 protein LBA0418 from Lactobacillus acidophilus (strain ATCC 700396 / NCK56 / N2 / NCFM).